The sequence spans 415 residues: Serine hydroxymethyltransferase (415 aa).

Residues leucine 119 and 123–125 each bind (6S)-5,6,7,8-tetrahydrofolate; that span reads GHL. At lysine 228 the chain carries N6-(pyridoxal phosphate)lysine. Residue 353–355 coordinates (6S)-5,6,7,8-tetrahydrofolate; it reads SAF.

This sequence belongs to the SHMT family. As to quaternary structure, homodimer. Pyridoxal 5'-phosphate serves as cofactor.

It is found in the cytoplasm. It carries out the reaction (6R)-5,10-methylene-5,6,7,8-tetrahydrofolate + glycine + H2O = (6S)-5,6,7,8-tetrahydrofolate + L-serine. It participates in one-carbon metabolism; tetrahydrofolate interconversion. It functions in the pathway amino-acid biosynthesis; glycine biosynthesis; glycine from L-serine: step 1/1. Its function is as follows. Catalyzes the reversible interconversion of serine and glycine with tetrahydrofolate (THF) serving as the one-carbon carrier. Also exhibits THF-independent aldolase activity toward beta-hydroxyamino acids, producing glycine and aldehydes, via a retro-aldol mechanism. This is Serine hydroxymethyltransferase from Halobacterium salinarum (strain ATCC 29341 / DSM 671 / R1).